A 112-amino-acid chain; its full sequence is Large ribosomal subunit protein uL22 (112 aa).

Belongs to the universal ribosomal protein uL22 family. As to quaternary structure, part of the 50S ribosomal subunit.

Functionally, this protein binds specifically to 23S rRNA; its binding is stimulated by other ribosomal proteins, e.g. L4, L17, and L20. It is important during the early stages of 50S assembly. It makes multiple contacts with different domains of the 23S rRNA in the assembled 50S subunit and ribosome. Its function is as follows. The globular domain of the protein is located near the polypeptide exit tunnel on the outside of the subunit, while an extended beta-hairpin is found that lines the wall of the exit tunnel in the center of the 70S ribosome. The protein is Large ribosomal subunit protein uL22 of Akkermansia muciniphila (strain ATCC BAA-835 / DSM 22959 / JCM 33894 / BCRC 81048 / CCUG 64013 / CIP 107961 / Muc).